Reading from the N-terminus, the 315-residue chain is L-threo-3-deoxy-hexylosonate aldolase (315 aa).

Substrate is bound at residue 50-51 (SN). K174 acts as the Schiff-base intermediate with substrate in catalysis.

Belongs to the DapA family.

It catalyses the reaction 2-dehydro-3-deoxy-L-galactonate = L-glyceraldehyde + pyruvate. Its pathway is carbohydrate acid metabolism. Functionally, mediates the conversion of 2-dehydro-3-deoxy-L-galactonate to pyruvate and L-glyceraldehyde in D-galacturonate catabolic process. This Hypocrea jecorina (Trichoderma reesei) protein is L-threo-3-deoxy-hexylosonate aldolase (lga1).